Here is a 411-residue protein sequence, read N- to C-terminus: Tyrosine--tRNA ligase (411 aa).

Tyr-34 contacts L-tyrosine. A 'HIGH' region motif is present at residues 39 to 48 (CTATSLHIGS). 2 residues coordinate L-tyrosine: Tyr-171 and Gln-175. A 'KMSKS' region motif is present at residues 231 to 235 (KMGKT). Lys-234 serves as a coordination point for ATP. The region spanning 345–411 (ISAYELFHEA…GKKKHILVRV (67 aa)) is the S4 RNA-binding domain.

The protein belongs to the class-I aminoacyl-tRNA synthetase family. TyrS type 1 subfamily. Homodimer.

The protein localises to the cytoplasm. It carries out the reaction tRNA(Tyr) + L-tyrosine + ATP = L-tyrosyl-tRNA(Tyr) + AMP + diphosphate + H(+). Catalyzes the attachment of tyrosine to tRNA(Tyr) in a two-step reaction: tyrosine is first activated by ATP to form Tyr-AMP and then transferred to the acceptor end of tRNA(Tyr). This chain is Tyrosine--tRNA ligase, found in Rickettsia conorii (strain ATCC VR-613 / Malish 7).